The primary structure comprises 85 residues: Sugar transporter SemiSWEET (85 aa).

One can recognise a PQ-loop domain in the interval 2–59 (ENLIGYVAAFLTTVSFLPQVLRVVMTKQTRDISRNMYIMFFLGVVLWFVYGILRSDLP). 3 helical membrane passes run 5–25 (IGYV…LRVV), 33–53 (ISRN…VYGI), and 57–77 (DLPI…ILYY).

Homodimer.

Its subcellular location is the cell membrane. In terms of biological role, the homodimer mediates transmembrane sugar transport down a concentration gradient. Transport is probably effected by rocking-type movements, where a cargo-binding cavity opens first on one and then on the other side of the membrane. The chain is Sugar transporter SemiSWEET from Leptospira biflexa serovar Patoc (strain Patoc 1 / ATCC 23582 / Paris).